We begin with the raw amino-acid sequence, 1362 residues long: Integrator complex subunit 2 homolog (1362 aa).

Residues 1–10 (MITSNNNNKN) show a composition bias toward low complexity. Disordered stretches follow at residues 1–20 (MITS…EMKS), 629–660 (TTGT…SSPN), and 928–963 (NNNK…EEEE). The span at 945 to 955 (DDVKMKDKEKE) shows a compositional bias: basic and acidic residues.

Belongs to the Integrator subunit 2 family. In terms of assembly, component of the Integrator complex. The core complex associates with protein phosphatase 2A subunits, to form the Integrator-PP2A (INTAC) complex.

The protein localises to the nucleus. It is found in the cytoplasm. Functionally, component of the integrator complex, a multiprotein complex that terminates RNA polymerase II (Pol II) transcription in the promoter-proximal region of genes. The integrator complex provides a quality checkpoint during transcription elongation by driving premature transcription termination of transcripts that are unfavorably configured for transcriptional elongation: the complex terminates transcription by (1) catalyzing dephosphorylation of the C-terminal domain (CTD) of Pol II subunit polr2a, (2) degrading the exiting nascent RNA transcript via endonuclease activity and (3) promoting the release of Pol II from bound DNA. The integrator complex is also involved in terminating the synthesis of non-coding Pol II transcripts, such as enhancer RNAs (eRNAs), small nuclear RNAs (snRNAs), telomerase RNAs and long non-coding RNAs (lncRNAs). This chain is Integrator complex subunit 2 homolog (ints2), found in Dictyostelium discoideum (Social amoeba).